The following is a 423-amino-acid chain: Serine--tRNA ligase (423 aa).

230–232 (TAE) provides a ligand contact to L-serine. An ATP-binding site is contributed by 261 to 263 (RQE). E284 contributes to the L-serine binding site. 348 to 351 (EISS) provides a ligand contact to ATP. L-serine is bound at residue S384.

Belongs to the class-II aminoacyl-tRNA synthetase family. Type-1 seryl-tRNA synthetase subfamily. As to quaternary structure, homodimer. The tRNA molecule binds across the dimer.

The protein localises to the cytoplasm. The catalysed reaction is tRNA(Ser) + L-serine + ATP = L-seryl-tRNA(Ser) + AMP + diphosphate + H(+). It catalyses the reaction tRNA(Sec) + L-serine + ATP = L-seryl-tRNA(Sec) + AMP + diphosphate + H(+). It participates in aminoacyl-tRNA biosynthesis; selenocysteinyl-tRNA(Sec) biosynthesis; L-seryl-tRNA(Sec) from L-serine and tRNA(Sec): step 1/1. In terms of biological role, catalyzes the attachment of serine to tRNA(Ser). Is also able to aminoacylate tRNA(Sec) with serine, to form the misacylated tRNA L-seryl-tRNA(Sec), which will be further converted into selenocysteinyl-tRNA(Sec). The chain is Serine--tRNA ligase from Thermoanaerobacter pseudethanolicus (strain ATCC 33223 / 39E) (Clostridium thermohydrosulfuricum).